A 297-amino-acid chain; its full sequence is Pyridoxal 5'-phosphate synthase subunit SNZ1 (297 aa).

Asp-23 provides a ligand contact to D-ribose 5-phosphate. Residue Lys-80 is the Schiff-base intermediate with D-ribose 5-phosphate of the active site. A D-ribose 5-phosphate-binding site is contributed by Gly-152. Arg-164 is a binding site for D-glyceraldehyde 3-phosphate. D-ribose 5-phosphate-binding positions include Gly-214 and 235 to 236; that span reads GS.

This sequence belongs to the PdxS/SNZ family. As to quaternary structure, homohexamer. Interacts with AIM18.

The enzyme catalyses aldehydo-D-ribose 5-phosphate + D-glyceraldehyde 3-phosphate + L-glutamine = pyridoxal 5'-phosphate + L-glutamate + phosphate + 3 H2O + H(+). The protein operates within cofactor biosynthesis; pyridoxal 5'-phosphate biosynthesis. Functionally, catalyzes the formation of pyridoxal 5'-phosphate from ribose 5-phosphate (RBP), glyceraldehyde 3-phosphate (G3P) and ammonia. The ammonia is provided by a SNO isoform. Can also use ribulose 5-phosphate and dihydroxyacetone phosphate as substrates, resulting from enzyme-catalyzed isomerization of RBP and G3P, respectively. The chain is Pyridoxal 5'-phosphate synthase subunit SNZ1 (SNZ1) from Saccharomyces cerevisiae (strain ATCC 204508 / S288c) (Baker's yeast).